A 196-amino-acid polypeptide reads, in one-letter code: MEDFMIEFLSKLQIFISKNITIKRLGIENIKNLCGVDIAYKGNIGYAVSVMFDGKDYFHKYVKGKVDFPYIPGYLFMREAPLMIKAVESFQCDLILVDGHGMAHPRKSGIASVIGVILDKPTIGVAKSKLYGDIVEEGSTNFIVVNGDKVGVKVGKYYYSIGNKVDIDDVVELSRNGYPKVLALADKLSKELKKKE.

Residues Asp-37 and Asp-98 each coordinate Mg(2+).

The protein belongs to the endonuclease V family. Mg(2+) serves as cofactor.

It is found in the cytoplasm. It catalyses the reaction Endonucleolytic cleavage at apurinic or apyrimidinic sites to products with a 5'-phosphate.. Functionally, DNA repair enzyme involved in the repair of deaminated bases. Selectively cleaves double-stranded DNA at the second phosphodiester bond 3' to a deoxyinosine leaving behind the intact lesion on the nicked DNA. This is Endonuclease V from Sulfolobus acidocaldarius (strain ATCC 33909 / DSM 639 / JCM 8929 / NBRC 15157 / NCIMB 11770).